We begin with the raw amino-acid sequence, 198 residues long: Imidazoleglycerol-phosphate dehydratase (198 aa).

Belongs to the imidazoleglycerol-phosphate dehydratase family.

Its subcellular location is the cytoplasm. It carries out the reaction D-erythro-1-(imidazol-4-yl)glycerol 3-phosphate = 3-(imidazol-4-yl)-2-oxopropyl phosphate + H2O. Its pathway is amino-acid biosynthesis; L-histidine biosynthesis; L-histidine from 5-phospho-alpha-D-ribose 1-diphosphate: step 6/9. The sequence is that of Imidazoleglycerol-phosphate dehydratase from Janthinobacterium sp. (strain Marseille) (Minibacterium massiliensis).